A 504-amino-acid polypeptide reads, in one-letter code: AMP phosphorylase (504 aa).

Residues G169, S195–S200, and T204 contribute to the AMP site. D257 acts as the Proton donor in catalysis. S265 and K289 together coordinate AMP.

Belongs to the thymidine/pyrimidine-nucleoside phosphorylase family. Type 2 subfamily.

The enzyme catalyses AMP + phosphate = alpha-D-ribose 1,5-bisphosphate + adenine. It catalyses the reaction CMP + phosphate = cytosine + alpha-D-ribose 1,5-bisphosphate. It carries out the reaction UMP + phosphate = alpha-D-ribose 1,5-bisphosphate + uracil. Functionally, catalyzes the conversion of AMP and phosphate to adenine and ribose 1,5-bisphosphate (R15P). Exhibits phosphorylase activity toward CMP and UMP in addition to AMP. Functions in an archaeal AMP degradation pathway, together with R15P isomerase and RubisCO. The protein is AMP phosphorylase of Methanococcus aeolicus (strain ATCC BAA-1280 / DSM 17508 / OCM 812 / Nankai-3).